The following is a 379-amino-acid chain: Carbamoyl phosphate synthase small chain (379 aa).

A CPSase region spans residues 1–184 (MVSLYLENGL…LDYKPFDEKN (184 aa)). L-glutamine contacts are provided by Ser44, Gly240, and Gly242. The Glutamine amidotransferase type-1 domain maps to 188-378 (TIAVLDFGAK…VKLLENFPTR (191 aa)). Cys268 (nucleophile) is an active-site residue. Positions 269, 272, 310, and 313 each coordinate L-glutamine. Catalysis depends on residues His351 and Glu353.

The protein belongs to the CarA family. In terms of assembly, composed of two chains; the small (or glutamine) chain promotes the hydrolysis of glutamine to ammonia, which is used by the large (or ammonia) chain to synthesize carbamoyl phosphate. Tetramer of heterodimers (alpha,beta)4.

The catalysed reaction is hydrogencarbonate + L-glutamine + 2 ATP + H2O = carbamoyl phosphate + L-glutamate + 2 ADP + phosphate + 2 H(+). It carries out the reaction L-glutamine + H2O = L-glutamate + NH4(+). It functions in the pathway amino-acid biosynthesis; L-arginine biosynthesis; carbamoyl phosphate from bicarbonate: step 1/1. It participates in pyrimidine metabolism; UMP biosynthesis via de novo pathway; (S)-dihydroorotate from bicarbonate: step 1/3. Functionally, small subunit of the glutamine-dependent carbamoyl phosphate synthetase (CPSase). CPSase catalyzes the formation of carbamoyl phosphate from the ammonia moiety of glutamine, carbonate, and phosphate donated by ATP, constituting the first step of 2 biosynthetic pathways, one leading to arginine and/or urea and the other to pyrimidine nucleotides. The small subunit (glutamine amidotransferase) binds and cleaves glutamine to supply the large subunit with the substrate ammonia. The protein is Carbamoyl phosphate synthase small chain of Helicobacter acinonychis (strain Sheeba).